The sequence spans 370 residues: Cytochrome b (370 aa).

Helical transmembrane passes span 30 to 50 (FGSM…FLAF), 74 to 96 (WVFR…LHIF), 109 to 129 (VWMS…MGYV), and 175 to 195 (FFVL…GHLI). Positions 80 and 94 each coordinate heme b. 2 residues coordinate heme b: histidine 179 and histidine 193. Residue histidine 198 participates in a ubiquinone binding. Helical transmembrane passes span 221 to 240 (YLGK…VLSL), 284 to 304 (VLGV…ALVN), 316 to 336 (FLVF…QCTV), and 342 to 362 (ILSP…LFIF).

Belongs to the cytochrome b family. In terms of assembly, the main subunits of complex b-c1 are: cytochrome b, cytochrome c1 and the Rieske protein. The cofactor is heme b.

The protein resides in the mitochondrion inner membrane. Functionally, component of the ubiquinol-cytochrome c reductase complex (complex III or cytochrome b-c1 complex) that is part of the mitochondrial respiratory chain. The b-c1 complex mediates electron transfer from ubiquinol to cytochrome c. Contributes to the generation of a proton gradient across the mitochondrial membrane that is then used for ATP synthesis. The sequence is that of Cytochrome b from Caenorhabditis elegans.